The following is a 118-amino-acid chain: uncharacterized protein (118 aa).

Residues Ile-41–Val-61 traverse the membrane as a helical segment.

The protein localises to the host membrane. This is an uncharacterized protein from Ostreid herpesvirus 1 (isolate France) (OsHV-1).